We begin with the raw amino-acid sequence, 557 residues long: Warthog protein 4 (557 aa).

A signal peptide spans 1–20; that stretch reads MRFSLLALVLLSSSYKFTYG. The segment at 272–308 is disordered; sequence QETNPQPPPPPGQQGGFVQPQGFQPQGGFQPQGFQPQ. Over residues 287–308 the composition is skewed to low complexity; the sequence is GFVQPQGFQPQGGFQPQGFQPQ.

It belongs to the hedgehog family. In terms of processing, the C-terminal domain displays an autoproteolysis activity.

It localises to the secreted. It is found in the cell surface. The protein localises to the cell membrane. The protein resides in the extracellular space. Its function is as follows. Intercellular signal essential for a variety of patterning events during development. In Caenorhabditis elegans, this protein is Warthog protein 4 (wrt-4).